We begin with the raw amino-acid sequence, 175 residues long: MTHLRSRSGNVTHVMQGQLYISQTPGESLTCILGSCVAACVHDPALRIGGMNHFLLPGRDPHDTGSVRYGARSMEALIDALLHKGADRQRLNVWLFGGANVLGTQTGIGAANSAFAVDFTRAQGLTLRGSDLGGTRGRRVHFTPATGDPRVDYMQSDGIDDPIAGPLGAPGVELF.

Belongs to the CheD family.

It carries out the reaction L-glutaminyl-[protein] + H2O = L-glutamyl-[protein] + NH4(+). Probably deamidates glutamine residues to glutamate on methyl-accepting chemotaxis receptors (MCPs), playing an important role in chemotaxis. In Jannaschia sp. (strain CCS1), this protein is Probable chemoreceptor glutamine deamidase CheD.